Consider the following 497-residue polypeptide: Pentatricopeptide repeat-containing protein At2g36240 (497 aa).

PPR repeat units follow at residues 156 to 186, 192 to 226, 227 to 261, 262 to 296, 297 to 331, 332 to 366, 367 to 401, 402 to 436, and 437 to 471; these read LEPI…MKRL, NVGV…RAKP, DVCT…GCEP, NVVS…GCRF, SEAT…RVLP, SEFD…GQTP, CFIA…GILP, DSVT…GYEP, and DETT…DMLP.

The protein belongs to the PPR family. P subfamily.

In Arabidopsis thaliana (Mouse-ear cress), this protein is Pentatricopeptide repeat-containing protein At2g36240.